Consider the following 180-residue polypeptide: MMLKSLTMENVKVVTGEIEKLRERIEKVKETLDLIPKEIEELERELERVRQEIAKKEDELIAVAREIRHKEHEFTEVKQKIAYHRKYLERADSPREYERLLQERQKLIERAYKLSEEIYELRRKYEALREEEEKLHQKEDEIEEKIHKLKKEYRALLNELKGLIEELNRKAREIIEKYGL.

Coiled-coil stretches lie at residues 3-82 (LKSL…QKIA) and 95-179 (REYE…EKYG).

This is an uncharacterized protein from Aquifex aeolicus (strain VF5).